Consider the following 482-residue polypeptide: MPRFVDRVVIHAKAGTGGHGCASVHREKFKPLGGPDGGNGGRGGSVILEVDPQVHTLLDFHFHPHLQAPNGTQGMGGHRNGANGDDLILKVPDGTVVLDDDGRILADLVGAGARFDAAAGGRGGLGNAALASRARKAPGFALLGEAGAEVDLTLELKTVADVGLVGFPSAGKSSLVSVLSAAKPKIADYPFTTLVPNLGVVTTGENSFVMADVPGLIPGAAEGRGLGLEFLRHIERCAVLVHVVDCATLEPGRDPVSDIDALENELARYQPTLQDDSVLGDLADRPRAVVLNKVDVPEADELADFVTEEVSQRGWPVFKVSTLTRDGLRPLTFALWEMIVAARAARPEPVKTRPVIRPIPVDESGFTVSADPQNPGGFVVRGVRPERWIRQTNFENDEAVGYLGDRLARLGVEDELLKLGAEPGCAVTIGDMTFDWEPQTPAGVDVTMSGRGTDARIDKTDRVGAAERRQARRVRRGQVEPE.

The region spanning 2–159 (PRFVDRVVIH…VDLTLELKTV (158 aa)) is the Obg domain. Residues 160–340 (ADVGLVGFPS…LTFALWEMIV (181 aa)) enclose the OBG-type G domain. GTP is bound by residues 166 to 173 (GFPSAGKS), 191 to 195 (FTTLV), 212 to 215 (DVPG), 292 to 295 (NKVD), and 321 to 323 (STL). The Mg(2+) site is built by Ser173 and Thr193. Positions 358–438 (PIPVDESGFT…IGDMTFDWEP (81 aa)) constitute an OCT domain. The segment at 441–482 (PAGVDVTMSGRGTDARIDKTDRVGAAERRQARRVRRGQVEPE) is disordered. The span at 453–469 (TDARIDKTDRVGAAERR) shows a compositional bias: basic and acidic residues.

The protein belongs to the TRAFAC class OBG-HflX-like GTPase superfamily. OBG GTPase family. In terms of assembly, monomer. It depends on Mg(2+) as a cofactor.

The protein resides in the cytoplasm. In terms of biological role, an essential GTPase which binds GTP, GDP and possibly (p)ppGpp with moderate affinity, with high nucleotide exchange rates and a fairly low GTP hydrolysis rate. Plays a role in control of the cell cycle, stress response, ribosome biogenesis and in those bacteria that undergo differentiation, in morphogenesis control. The chain is GTPase Obg from Mycobacteroides abscessus (strain ATCC 19977 / DSM 44196 / CCUG 20993 / CIP 104536 / JCM 13569 / NCTC 13031 / TMC 1543 / L948) (Mycobacterium abscessus).